We begin with the raw amino-acid sequence, 394 residues long: Elongation factor Tu 2 (394 aa).

The tr-type G domain occupies 10-204 (KPHVNVGTIG…ALDSYIPEPE (195 aa)). The interval 19 to 26 (GHVDHGKT) is G1. 19-26 (GHVDHGKT) provides a ligand contact to GTP. A Mg(2+)-binding site is contributed by threonine 26. A G2 region spans residues 60–64 (GITIS). A G3 region spans residues 81–84 (DCPG). GTP contacts are provided by residues 81–85 (DCPGH) and 136–139 (NKCD). Residues 136 to 139 (NKCD) form a G4 region. The tract at residues 174–176 (SAL) is G5.

This sequence belongs to the TRAFAC class translation factor GTPase superfamily. Classic translation factor GTPase family. EF-Tu/EF-1A subfamily. Monomer.

The protein localises to the cytoplasm. It catalyses the reaction GTP + H2O = GDP + phosphate + H(+). Functionally, GTP hydrolase that promotes the GTP-dependent binding of aminoacyl-tRNA to the A-site of ribosomes during protein biosynthesis. This chain is Elongation factor Tu 2, found in Photorhabdus laumondii subsp. laumondii (strain DSM 15139 / CIP 105565 / TT01) (Photorhabdus luminescens subsp. laumondii).